Reading from the N-terminus, the 332-residue chain is MATIYRDKDADLRVLKDKTIAIIGYGNQGHAQGANLKDSGLDVIAADLKDSPAWKRAEKDGLRVMTVPEASKEADFIQILLPDELQPRIYREQIAPYLEEGNILGFSHGFNIHFNQIIPPEYVDVVMVAPKGPGDLVRRQFLEGKGVPCLVAVKQDYSKSAKRIALAYAKGIGGTRAGVLETTFAEETETDLFGEQVDLCGGVTAMIKAAFETMVQAGYQPEIAYFEACHELKLITDLIHEGGLMKMWNSVSNTAEYGGLTRGDRIINEQSREAMWEILEEIQSGKFAREWILESQAGLPVKKALEQQESEHLIEKVGAELRAMMPWLGEKK.

A KARI N-terminal Rossmann domain is found at 1-182 (MATIYRDKDA…GGTRAGVLET (182 aa)). NADP(+) is bound by residues 25 to 28 (YGNQ), Lys-49, Ser-51, and 83 to 86 (DELQ). His-108 is an active-site residue. Residue Gly-134 participates in NADP(+) binding. Residues 183 to 328 (TFAEETETDL…AELRAMMPWL (146 aa)) enclose the KARI C-terminal knotted domain. The Mg(2+) site is built by Asp-191, Glu-195, Glu-227, and Glu-231. Substrate is bound at residue Ser-252.

It belongs to the ketol-acid reductoisomerase family. Mg(2+) serves as cofactor.

The catalysed reaction is (2R)-2,3-dihydroxy-3-methylbutanoate + NADP(+) = (2S)-2-acetolactate + NADPH + H(+). It carries out the reaction (2R,3R)-2,3-dihydroxy-3-methylpentanoate + NADP(+) = (S)-2-ethyl-2-hydroxy-3-oxobutanoate + NADPH + H(+). Its pathway is amino-acid biosynthesis; L-isoleucine biosynthesis; L-isoleucine from 2-oxobutanoate: step 2/4. It functions in the pathway amino-acid biosynthesis; L-valine biosynthesis; L-valine from pyruvate: step 2/4. Functionally, involved in the biosynthesis of branched-chain amino acids (BCAA). Catalyzes an alkyl-migration followed by a ketol-acid reduction of (S)-2-acetolactate (S2AL) to yield (R)-2,3-dihydroxy-isovalerate. In the isomerase reaction, S2AL is rearranged via a Mg-dependent methyl migration to produce 3-hydroxy-3-methyl-2-ketobutyrate (HMKB). In the reductase reaction, this 2-ketoacid undergoes a metal-dependent reduction by NADPH to yield (R)-2,3-dihydroxy-isovalerate. This is Ketol-acid reductoisomerase (NADP(+)) from Methanothrix thermoacetophila (strain DSM 6194 / JCM 14653 / NBRC 101360 / PT) (Methanosaeta thermophila).